A 262-amino-acid polypeptide reads, in one-letter code: tRNA pseudouridine synthase A (262 aa).

Asp51 (nucleophile) is an active-site residue. Tyr109 lines the substrate pocket.

The protein belongs to the tRNA pseudouridine synthase TruA family. Homodimer.

The enzyme catalyses uridine(38/39/40) in tRNA = pseudouridine(38/39/40) in tRNA. Functionally, formation of pseudouridine at positions 38, 39 and 40 in the anticodon stem and loop of transfer RNAs. This is tRNA pseudouridine synthase A from Actinobacillus pleuropneumoniae serotype 3 (strain JL03).